Consider the following 703-residue polypeptide: Elongation factor G (703 aa).

Positions 7 to 287 (KFTRNIGIAA…AVMRYLPSPA (281 aa)) constitute a tr-type G domain. GTP contacts are provided by residues 16–23 (AHIDAGKT), 84–88 (DTPGH), and 138–141 (NKMD).

It belongs to the TRAFAC class translation factor GTPase superfamily. Classic translation factor GTPase family. EF-G/EF-2 subfamily.

It localises to the cytoplasm. In terms of biological role, catalyzes the GTP-dependent ribosomal translocation step during translation elongation. During this step, the ribosome changes from the pre-translocational (PRE) to the post-translocational (POST) state as the newly formed A-site-bound peptidyl-tRNA and P-site-bound deacylated tRNA move to the P and E sites, respectively. Catalyzes the coordinated movement of the two tRNA molecules, the mRNA and conformational changes in the ribosome. The polypeptide is Elongation factor G (Christiangramia forsetii (strain DSM 17595 / CGMCC 1.15422 / KT0803) (Gramella forsetii)).